The following is a 316-amino-acid chain: Taste receptor type 2 member 109 (316 aa).

Residues 1–14 (MEHLLKRTFDITEN) lie on the Extracellular side of the membrane. Residues 15 to 35 (ILLIILFIELIIGLIGNGFTA) form a helical membrane-spanning segment. Residues 36-62 (LVHCMDWVKRKKMSLVNKILTALATSR) are Cytoplasmic-facing. A helical membrane pass occupies residues 63–83 (IFLLWFMLVGFPISSLYPYLV). Over 84–94 (TTRLMIQFTST) the chain is Extracellular. A helical transmembrane segment spans residues 95-115 (LWTIANHISVWFATCLSVFYF). Residues 116-135 (LKIANFSNSPFLYLKRRVEK) are Cytoplasmic-facing. Residues 136–156 (VVSVTLLVSLVLLFLNILLLN) traverse the membrane as a helical segment. The Extracellular portion of the chain corresponds to 157-191 (LEINMCINEYHQINISYIFISYYHLSCQIQVLGSH). N-linked (GlcNAc...) asparagine glycosylation occurs at Asn170. The chain crosses the membrane as a helical span at residues 192–212 (IIFLSVPVVLSLSTFLLLIFS). At 213–241 (LWTLHKRMQQHVQGGRDARTTAHFKALQA) the chain is on the cytoplasmic side. A helical transmembrane segment spans residues 242-262 (VIAFLLLYSIFILSLLLQFWI). At 263 to 270 (HGLRKKPP) the chain is on the extracellular side. A helical membrane pass occupies residues 271–291 (FIAFCQVVDTAFPSFHSYVLI). Residues 292-316 (LRDRKLRHASLSVLSWLKCRPNYVK) lie on the Cytoplasmic side of the membrane.

This sequence belongs to the G-protein coupled receptor T2R family.

The protein localises to the membrane. Functionally, putative taste receptor which may play a role in the perception of bitterness. The sequence is that of Taste receptor type 2 member 109 from Mus musculus (Mouse).